The following is a 345-amino-acid chain: GDSL esterase/lipase At1g23500 (345 aa).

Residues 1–24 (MNFSLLSTMLMALSSVCLFFVGYA) form the signal peptide. Ser42 (nucleophile) is an active-site residue. An N-linked (GlcNAc...) asparagine glycan is attached at Asn103. Catalysis depends on residues Asp320 and His323.

It belongs to the 'GDSL' lipolytic enzyme family.

The protein localises to the secreted. The sequence is that of GDSL esterase/lipase At1g23500 from Arabidopsis thaliana (Mouse-ear cress).